The following is a 181-amino-acid chain: Ninjurin-B (181 aa).

Over residues 1 to 10 (MDSGEVKISL) the composition is skewed to basic and acidic residues. Residues 1 to 72 (MDSGEVKISL…SNKKCSSDLS (72 aa)) are disordered. Topologically, residues 1-115 (MDSGEVKISL…YNDKASTYIY (115 aa)) are extracellular. A compositionally biased stretch (polar residues) spans 12–26 (DSPSSGESFASTTSG). Positions 33-49 (RDLDIQVHESHIKDDQF) are enriched in basic and acidic residues. The helix alpha1 stretch occupies residues 80 to 91 (NKNVAEGLMDIA). The helix alpha2 stretch occupies residues 94-110 (SANANQLRFLITYNDKA). A helical membrane pass occupies residues 116–136 (SMIMVILSLVLQLLVGIMLIF). Residues 137 to 153 (KRRLKRFRNRSYERTND) lie on the Cytoplasmic side of the membrane. A helical membrane pass occupies residues 154-174 (LLVMGVFMITVINILLAAFTT). The Extracellular portion of the chain corresponds to 175–181 (TDGGGSH).

It belongs to the ninjurin family.

It localises to the membrane. Effector of non-apoptotic necrotic cell death that mediates plasma membrane rupture (cytolysis): oligomerizes in response to death stimuli and promotes plasma membrane rupture by introducing hydrophilic faces of 2 alpha helices into the hydrophobic membrane, leading to release intracellular molecules that propagate the inflammatory response. Also acts as a homophilic transmembrane adhesion molecule that promotes cell adhesion by mediating homophilic interactions via its extracellular region. In Drosophila melanogaster (Fruit fly), this protein is Ninjurin-B.